The following is a 650-amino-acid chain: Chaperone protein DnaK (650 aa).

T200 bears the Phosphothreonine; by autocatalysis mark. The interval A614–Q634 is disordered.

The protein belongs to the heat shock protein 70 family.

Acts as a chaperone. This Burkholderia cenocepacia (strain ATCC BAA-245 / DSM 16553 / LMG 16656 / NCTC 13227 / J2315 / CF5610) (Burkholderia cepacia (strain J2315)) protein is Chaperone protein DnaK.